A 476-amino-acid polypeptide reads, in one-letter code: Argininosuccinate lyase (476 aa).

This sequence belongs to the lyase 1 family. Argininosuccinate lyase subfamily.

The protein resides in the cytoplasm. The catalysed reaction is 2-(N(omega)-L-arginino)succinate = fumarate + L-arginine. The protein operates within amino-acid biosynthesis; L-arginine biosynthesis; L-arginine from L-ornithine and carbamoyl phosphate: step 3/3. The protein is Argininosuccinate lyase of Thermobifida fusca (strain YX).